The following is a 331-amino-acid chain: Pyruvate dehydrogenase E1 component subunit beta (331 aa).

E60 lines the thiamine diphosphate pocket. Residues L113, A161, I162, D164, and N166 each contribute to the K(+) site.

Heterodimer of an alpha and a beta chain. Requires thiamine diphosphate as cofactor.

The protein localises to the plastid. The protein resides in the chloroplast. The catalysed reaction is N(6)-[(R)-lipoyl]-L-lysyl-[protein] + pyruvate + H(+) = N(6)-[(R)-S(8)-acetyldihydrolipoyl]-L-lysyl-[protein] + CO2. Its function is as follows. The pyruvate dehydrogenase complex catalyzes the overall conversion of pyruvate to acetyl-CoA and CO(2). It contains multiple copies of three enzymatic components: pyruvate dehydrogenase (E1), dihydrolipoamide acetyltransferase (E2) and lipoamide dehydrogenase (E3). In Porphyra purpurea (Red seaweed), this protein is Pyruvate dehydrogenase E1 component subunit beta (pdhB).